The following is a 142-amino-acid chain: Hemoglobin subunit alpha-A (142 aa).

Positions 2-142 (VLSAADKTNV…VGAVLTAKYR (141 aa)) constitute a Globin domain. O2 is bound at residue histidine 59. Heme b is bound at residue histidine 88.

It belongs to the globin family. In terms of assembly, heterotetramer of two alpha chains and two beta chains. Red blood cells.

In terms of biological role, involved in oxygen transport from the lung to the various peripheral tissues. In Cairina moschata (Muscovy duck), this protein is Hemoglobin subunit alpha-A (HBAA).